The sequence spans 315 residues: Neuroguidin (315 aa).

Residue Ala2 is modified to N-acetylalanine. A coiled-coil region spans residues Glu5–Lys42. The interval Ala41–Pro174 is necessary for interaction with EIF4E. A phosphoserine mark is found at Ser121, Ser142, and Ser143. The disordered stretch occupies residues Ser123–Pro174. Over residues Glu144–Glu153 the composition is skewed to acidic residues. Positions Tyr181 to Val205 form a coiled coil. A phosphoserine mark is found at Ser204 and Ser214. Residues Ser252–Arg315 are disordered. A compositionally biased stretch (polar residues) spans Val264–Ser276. The segment covering Thr295–Arg315 has biased composition (basic residues).

This sequence belongs to the SAS10 family. In terms of assembly, part of the small subunit (SSU) processome, composed of more than 70 proteins and the RNA chaperone small nucleolar RNA (snoRNA) U3. Interacts with CPEB1 and EIF4E.

Its subcellular location is the nucleus. The protein localises to the nucleolus. The protein resides in the chromosome. It localises to the centromere. It is found in the cytoplasm. Its subcellular location is the cell projection. The protein localises to the axon. The protein resides in the dendrite. It localises to the filopodium. Its function is as follows. Part of the small subunit (SSU) processome, first precursor of the small eukaryotic ribosomal subunit. During the assembly of the SSU processome in the nucleolus, many ribosome biogenesis factors, an RNA chaperone and ribosomal proteins associate with the nascent pre-rRNA and work in concert to generate RNA folding, modifications, rearrangements and cleavage as well as targeted degradation of pre-ribosomal RNA by the RNA exosome. Its dissociation from the complex determines the transition from state pre-A1 to state pre-A1*. Inhibits mRNA translation in a cytoplasmic polyadenylation element (CPE)-dependent manner. The sequence is that of Neuroguidin (NGDN) from Bos taurus (Bovine).